Here is a 746-residue protein sequence, read N- to C-terminus: Dystrobrevin alpha (746 aa).

The tract at residues 1–288 (MIEDSGKRGN…SHSNQHQMKE (288 aa)) is interaction with MAGEE1. The ZZ-type zinc-finger motif lies at 238–294 (FHPVECSYCHSESMMGFRYRCQQCHNYQLCQDCFWRGHAGGSHSNQHQMKEYTSWKS). Zn(2+) is bound by residues Cys-243, Cys-246, Cys-258, Cys-261, Cys-267, Cys-270, His-280, and His-284. A syntrophin-binding region region spans residues 397-447 (DRLADEHVLIGLYVNMLRNDPPCMLESSNRLDEEHRLIARYAARLAAESSS). The stretch at 458–557 (DISFTIDANK…KLLKEEELKQ (100 aa)) forms a coiled coil. 3 disordered regions span residues 555-577 (LKQG…SRPI), 646-667 (ETES…APSP), and 684-721 (YIHG…VRQL). Residues 563–576 (SSPRSSPSHTISRP) show a composition bias toward low complexity. Phosphoserine is present on Ser-666.

This sequence belongs to the dystrophin family. Dystrobrevin subfamily. As to quaternary structure, interacts with dystrophin, utrophin and the syntrophins SNTA1, SNTB1, SNTB2, SNTG1 and SNTG2. Binds dystrobrevin binding protein 1. Interacts with MAGEE1. Interacts with Ctnnal1. The interaction is required for correct localization of both Ctnnal1 and Dtna. In terms of assembly, does not interact with utrophin. Does not interact with syntrophin. Phosphorylation of isoform 2 on tyrosine kinase substrate domain present in the C-terminus. Expressed in skeletal muscle, heart, lung and brain. Sarcolemma and neuromuscular junction in skeletal muscle. Isoform 2 is restricted to the neuromuscular junction. Isoforms 5 and 6 are only expressed in muscle.

It localises to the cytoplasm. Its subcellular location is the synapse. The protein resides in the cell membrane. Functionally, involved in synapse maturation and required for normal muscle function. The sequence is that of Dystrobrevin alpha (Dtna) from Mus musculus (Mouse).